The primary structure comprises 156 residues: Transcriptional repressor NrdR (156 aa).

Residues 3–34 (CPFCGSMDTRVLDSRPTLDGTAIRRRRECSSC) fold into a zinc finger. Positions 49-139 (VLVVKKDGRR…VYRDFREVDQ (91 aa)) constitute an ATP-cone domain.

This sequence belongs to the NrdR family. The cofactor is Zn(2+).

In terms of biological role, negatively regulates transcription of bacterial ribonucleotide reductase nrd genes and operons by binding to NrdR-boxes. This Thermotoga maritima (strain ATCC 43589 / DSM 3109 / JCM 10099 / NBRC 100826 / MSB8) protein is Transcriptional repressor NrdR.